The sequence spans 454 residues: Protein translocase subunit SecY (454 aa).

10 helical membrane passes run 43–63, 97–117, 144–164, 168–188, 201–221, 226–246, 289–309, 334–354, 390–410, and 414–434; these read LTIA…LPYI, FTLG…AFVI, TLLL…AFIF, ILKL…ILWI, SSFL…GMSF, IFSF…WAAI, PVVF…YILL, IVEA…IIDP, LIGA…GFVF, and IFKG…TEIL.

Belongs to the SecY/SEC61-alpha family. As to quaternary structure, component of the plastid Sec protein translocase complex, which is composed of at least SecY and SecE.

It is found in the plastid. It localises to the chloroplast thylakoid membrane. The central subunit of the protein translocation channel SecYE. Consists of two halves formed by TMs 1-5 and 6-10. These two domains form a lateral gate at the front which open onto the bilayer between TMs 2 and 7, and are clamped together by SecE at the back. The channel is closed by both a pore ring composed of hydrophobic SecY resides and a short helix (helix 2A) on the extracellular side of the membrane which forms a plug. The chain is Protein translocase subunit SecY from Heterosigma akashiwo (strain NIES-293 / 8280G21-1).